The following is a 315-amino-acid chain: DNA-directed RNA polymerase subunit alpha (315 aa).

The interval 1–228 (MIGMEKPKIE…EHLELFISLT (228 aa)) is alpha N-terminal domain (alpha-NTD). An alpha C-terminal domain (alpha-CTD) region spans residues 245 to 315 (RNKLMEMTIE…FGLSLRQPDD (71 aa)).

The protein belongs to the RNA polymerase alpha chain family. Homodimer. The RNAP catalytic core consists of 2 alpha, 1 beta, 1 beta' and 1 omega subunit. When a sigma factor is associated with the core the holoenzyme is formed, which can initiate transcription.

The catalysed reaction is RNA(n) + a ribonucleoside 5'-triphosphate = RNA(n+1) + diphosphate. Functionally, DNA-dependent RNA polymerase catalyzes the transcription of DNA into RNA using the four ribonucleoside triphosphates as substrates. The protein is DNA-directed RNA polymerase subunit alpha of Symbiobacterium thermophilum (strain DSM 24528 / JCM 14929 / IAM 14863 / T).